A 137-amino-acid chain; its full sequence is ATP synthase epsilon chain, chloroplastic (137 aa).

This sequence belongs to the ATPase epsilon chain family. As to quaternary structure, F-type ATPases have 2 components, CF(1) - the catalytic core - and CF(0) - the membrane proton channel. CF(1) has five subunits: alpha(3), beta(3), gamma(1), delta(1), epsilon(1). CF(0) has three main subunits: a, b and c.

Its subcellular location is the plastid. It is found in the chloroplast thylakoid membrane. Its function is as follows. Produces ATP from ADP in the presence of a proton gradient across the membrane. The protein is ATP synthase epsilon chain, chloroplastic of Bigelowiella natans (Pedinomonas minutissima).